The chain runs to 68 residues: Protein DsrB (68 aa).

Belongs to the DsrB family.

This is Protein DsrB from Sodalis glossinidius (strain morsitans).